Reading from the N-terminus, the 342-residue chain is S-adenosylmethionine:tRNA ribosyltransferase-isomerase (342 aa).

The protein belongs to the QueA family. In terms of assembly, monomer.

It localises to the cytoplasm. The enzyme catalyses 7-aminomethyl-7-carbaguanosine(34) in tRNA + S-adenosyl-L-methionine = epoxyqueuosine(34) in tRNA + adenine + L-methionine + 2 H(+). The protein operates within tRNA modification; tRNA-queuosine biosynthesis. In terms of biological role, transfers and isomerizes the ribose moiety from AdoMet to the 7-aminomethyl group of 7-deazaguanine (preQ1-tRNA) to give epoxyqueuosine (oQ-tRNA). The polypeptide is S-adenosylmethionine:tRNA ribosyltransferase-isomerase (Streptococcus pneumoniae (strain Hungary19A-6)).